The sequence spans 485 residues: BTB/POZ domain-containing protein YLR108C (485 aa).

Residues 26–121 enclose the BTB domain; the sequence is EVFKIRIGQK…LIKEYDYHFT (96 aa).

Its subcellular location is the nucleus. This chain is BTB/POZ domain-containing protein YLR108C, found in Saccharomyces cerevisiae (strain ATCC 204508 / S288c) (Baker's yeast).